An 853-amino-acid polypeptide reads, in one-letter code: Probable inorganic carbon transporter subunit DabA (853 aa).

Residues 1–21 are disordered; it reads MSHANSEETMMNTAVAHPSTS. Over residues 7-21 the composition is skewed to polar residues; that stretch reads EETMMNTAVAHPSTS. Positions 364, 366, 546, and 561 each coordinate Zn(2+).

It belongs to the inorganic carbon transporter (TC 9.A.2) DabA family. In terms of assembly, forms a complex with DabB. Zn(2+) is required as a cofactor.

It localises to the cell inner membrane. Its function is as follows. Part of an energy-coupled inorganic carbon pump. The chain is Probable inorganic carbon transporter subunit DabA from Methylovorus glucosotrophus (strain SIP3-4).